A 231-amino-acid polypeptide reads, in one-letter code: Pro-thyrotropin-releasing hormone (231 aa).

The signal sequence occupies residues 1–22; it reads MRAACVIILASLTVFMSPGLQC. Positions 50 to 139 are disordered; that stretch reads TQTEDENHGD…PTAQSELAKR (90 aa). Positions 54–70 are enriched in basic and acidic residues; the sequence is DENHGDGEQTEWLEKRQ. Gln70 bears the Pyrrolidone carboxylic acid mark. Proline amide is present on Pro72. Gln76 is modified (pyrrolidone carboxylic acid). Pro78 carries the proline amide modification. Gln97 bears the Pyrrolidone carboxylic acid mark. Pro99 carries the post-translational modification Proline amide. A Pyrrolidone carboxylic acid modification is found at Gln114. Pro116 is modified (proline amide). Position 140 is a pyrrolidone carboxylic acid (Gln140). Pro142 is modified (proline amide). Residue Gln154 is modified to Pyrrolidone carboxylic acid. Proline amide is present on Pro156. Gln175 carries the post-translational modification Pyrrolidone carboxylic acid. Position 177 is a proline amide (Pro177). Residues 206–231 form a disordered region; it reads SRAEEKRQHPGKRFALEDELTEQESL. At Gln213 the chain carries Pyrrolidone carboxylic acid. Pro215 carries the post-translational modification Proline amide. Positions 222-231 are enriched in acidic residues; sequence EDELTEQESL.

It belongs to the TRH family.

The protein resides in the secreted. Its function is as follows. Functions as a regulator of the biosynthesis of TSH in the anterior pituitary gland and as a neurotransmitter/ neuromodulator in the central and peripheral nervous systems. The chain is Pro-thyrotropin-releasing hormone (trh) from Carassius auratus (Goldfish).